Reading from the N-terminus, the 80-residue chain is RNA-binding protein Hfq (80 aa).

One can recognise a Sm domain in the interval 10-70; sequence DLFLNTVRKQ…ISTIMPGQPM (61 aa).

Belongs to the Hfq family. As to quaternary structure, homohexamer.

RNA chaperone that binds small regulatory RNA (sRNAs) and mRNAs to facilitate mRNA translational regulation in response to envelope stress, environmental stress and changes in metabolite concentrations. Also binds with high specificity to tRNAs. This chain is RNA-binding protein Hfq, found in Rhizobium etli (strain CIAT 652).